The following is a 241-amino-acid chain: Linker for activation of T-cells family member 1 (241 aa).

Topologically, residues 1-4 (MEAD) are extracellular. The helical; Signal-anchor for type III membrane protein transmembrane segment at 5 to 28 (ALSPVELGLLLLPFVVMLLAALCV) threads the bilayer. 2 S-palmitoyl cysteine lipidation sites follow: C27 and C30. Topologically, residues 29-241 (RCRELPASYD…PDYENLQELN (213 aa)) are cytoplasmic. Residues S41, S44, S87, S104, S109, and S112 each carry the phosphoserine modification. Positions 78-139 (QPDLLPIPRS…DDYPEGYLVV (62 aa)) are disordered. The segment covering 97–115 (MPSSRQNSDDANSVASYEN) has biased composition (polar residues). Positions 124–133 (DEDEDEDDYP) are enriched in acidic residues. The interaction with PLCG1 stretch occupies residues 136-139 (YLVV). Y175 carries the post-translational modification Phosphotyrosine. Interaction with GRB2, GRAP2 and PIK3R1 stretches follow at residues 175–178 (YVNV) and 195–198 (YVNV). 3 positions are modified to phosphoserine: S199, S212, and S215. Positions 209-241 (ELASVTSQEVEDEEEEDVDGEEAPDYENLQELN) are disordered. Residues 217–233 (EVEDEEEEDVDGEEAPD) show a composition bias toward acidic residues. The residue at position 234 (Y234) is a Phosphotyrosine.

When phosphorylated, interacts directly with the PIK3R1 subunit of phosphoinositide 3-kinase and the SH2 domains of GRB2, GRAP, GRAP2, PLCG1 and PLCG2. Interacts indirectly with CBL, SOS, VAV, and LCP2. Interacts with SHB, SKAP2 and CLNK. Interacts with FCGR1A. Interacts with GRB2, PLCG1 and THEMIS upon TCR activation in thymocytes. Interacts with THEMIS2. Post-translationally, phosphorylated on tyrosines by ZAP70 upon TCR activation, or by SYK upon other immunoreceptor activation; which leads to the recruitment of multiple signaling molecules. Is one of the most prominently tyrosine-phosphorylated proteins detected following TCR engagement. May be dephosphorylated by PTPRJ. In terms of processing, palmitoylation of Cys-27 and Cys-30 is required for raft targeting and efficient phosphorylation. Phosphorylated on tyrosines by ZAP70 upon TCR activation, or by SYK upon other immunoreceptor activation; which leads to the recruitment of multiple signaling molecules. Is one of the most prominently tyrosine-phosphorylated proteins detected following TCR engagement. May be dephosphorylated by PTPRJ. Phosphorylated by ITK leading to the recruitment of VAV1 to LAT-containing complexes. Post-translationally, 'Lys-63'-linked ubiquitinated by TRAF6. As to expression, expressed in NK cells. Present in lymph node, spleen and thymus (at protein level).

The protein resides in the cell membrane. Functionally, required for TCR (T-cell antigen receptor)- and pre-TCR-mediated signaling, both in mature T-cells and during their development. Involved in FCGR3 (low affinity immunoglobulin gamma Fc region receptor III)-mediated signaling in natural killer cells and FCER1 (high affinity immunoglobulin epsilon receptor)-mediated signaling in mast cells. Couples activation of these receptors and their associated kinases with distal intracellular events such as mobilization of intracellular calcium stores, PKC activation, MAPK activation or cytoskeletal reorganization through the recruitment of PLCG1, GRB2, GRAP2, and other signaling molecules. This is Linker for activation of T-cells family member 1 (Lat) from Rattus norvegicus (Rat).